The chain runs to 96 residues: Co-chaperonin GroES (96 aa).

Belongs to the GroES chaperonin family. In terms of assembly, heptamer of 7 subunits arranged in a ring. Interacts with the chaperonin GroEL.

It is found in the cytoplasm. Together with the chaperonin GroEL, plays an essential role in assisting protein folding. The GroEL-GroES system forms a nano-cage that allows encapsulation of the non-native substrate proteins and provides a physical environment optimized to promote and accelerate protein folding. GroES binds to the apical surface of the GroEL ring, thereby capping the opening of the GroEL channel. The chain is Co-chaperonin GroES from Dechloromonas aromatica (strain RCB).